The chain runs to 68 residues: DNA-directed RNA polymerase subunit omega (68 aa).

It belongs to the RNA polymerase subunit omega family. In terms of assembly, the RNAP catalytic core consists of 2 alpha, 1 beta, 1 beta' and 1 omega subunit. When a sigma factor is associated with the core the holoenzyme is formed, which can initiate transcription.

It catalyses the reaction RNA(n) + a ribonucleoside 5'-triphosphate = RNA(n+1) + diphosphate. In terms of biological role, promotes RNA polymerase assembly. Latches the N- and C-terminal regions of the beta' subunit thereby facilitating its interaction with the beta and alpha subunits. The sequence is that of DNA-directed RNA polymerase subunit omega from Desulforapulum autotrophicum (strain ATCC 43914 / DSM 3382 / VKM B-1955 / HRM2) (Desulfobacterium autotrophicum).